A 726-amino-acid polypeptide reads, in one-letter code: MGTERKRKISLFDVMDDPSAPAKNAKTSGLPDGGINSLINKWNGKPYSQRYYDILEKRRTLPVWLQKEEFLKTLNNNQTLILVGETGSGKTTQIPQFVIDAVDAETSDKRRKWLVGCTQPRRVAAMSVSRRVAEEMDVTIGEEVGYSIRFEDCSSPRTVLKYLTDGMLLREAMADPLLERYKVIILDEAHERTLATDVLFGLLKEVLKNRPDLKLVVMSATLEAEKFQDYFSGAPLMKVPGRLHPVEIFYTQEPERDYLEAAIRTVVQIHMCEPPGDILVFLTGEEEIEDACRKINKEVGNLGDQVGPIKVVPLYSTLPPAMQQKIFDPAPEPVTEGGPPGRKIVVSTNIAETSLTIDGIVYVIDPGFAKQKVYNPRIRVESLLVSPISKASAHQRSGRAGRTRPGKCFRLYTEKSFNNDLQPQTYPEILRSNLANTVLTLKKLGIDDLVHFDFMDPPAPETLMRALEVLNYLGALDDDGNLTKTGEIMSEFPLDPQMAKMLIVSPEFNCSNEILSVSAMLSVPNCFIRPREAQKAADEAKARFGHIEGDHLTLLNVYHAFKQNNEDPNWCYENFINNRAMKSADNVRQQLVRIMSRFNLKMCSTDFNSRDYYINIRKAMLAGYFMQVAHLERTGHYLTVKDNQVVHLHPSNCLDHKPEWVIYNEYVLTSRNFIRTVTDIRGEWLVDVASHYYDLSNFPNCEAKRVIEKLYKKREREKEESKKNRK.

Residues 71–240 (LKTLNNNQTL…FSGAPLMKVP (170 aa)) form the Helicase ATP-binding domain. 84–91 (GETGSGKT) provides a ligand contact to ATP. The short motif at 187–190 (DEAH) is the DEAH box element. The Helicase C-terminal domain maps to 265–445 (TVVQIHMCEP…NTVLTLKKLG (181 aa)).

It belongs to the DEAD box helicase family. DEAH subfamily. PRP43 sub-subfamily.

It carries out the reaction ATP + H2O = ADP + phosphate + H(+). May be involved in pre-mRNA splicing. This is Probable pre-mRNA-splicing factor ATP-dependent RNA helicase DEAH2 from Arabidopsis thaliana (Mouse-ear cress).